Reading from the N-terminus, the 1180-residue chain is Neurexin like receptor 1 (1180 aa).

A signal peptide spans 1–20 (MSGLCLVLLLSIFAVSQSSG). At 21–1108 (ECSDVSFSSV…SQNKQDLVSK (1088 aa)) the chain is on the extracellular side. One can recognise a Laminin G-like 1 domain in the interval 124-290 (PITAFDDSSY…LSPNEVHNQC (167 aa)). N-linked (GlcNAc...) asparagine glycosylation occurs at N229. C267 and C290 are disulfide-bonded. N-linked (GlcNAc...) asparagine glycans are attached at residues N302, N336, N355, and N436. The EGF-like 1 domain occupies 444 to 481 (FQEKCLPNPCENGGGCVQSALDDYVCNCKEGYKGKNCH). 3 disulfides stabilise this stretch: C448–C459, C453–C469, and C471–C480. N-linked (GlcNAc...) asparagine glycosylation is found at N522 and N636. A Laminin G-like 2 domain is found at 695 to 863 (TFDPVTFSNR…GVAIGDDGYC (169 aa)). The EGF-like 2 domain maps to 859–896 (DDGYCRPDLCQNGGQCVDKYDGYVCDCSMTPFGGSDCT). Cystine bridges form between C863/C874, C868/C883, and C885/C895. 6 N-linked (GlcNAc...) asparagine glycosylation sites follow: N933, N949, N978, N997, N1011, and N1052. Residues 1109 to 1129 (AIIGGGILALSLFILCMSSLI) form a helical membrane-spanning segment. Residues 1130 to 1180 (CYMRSRPEGVYKTNETGENCSPSRSEEPLVHNTTSNNNNNPTYASNKEYFC) lie on the Cytoplasmic side of the membrane. Positions 1142-1152 (TNETGENCSPS) are enriched in polar residues. A disordered region spans residues 1142-1180 (TNETGENCSPSRSEEPLVHNTTSNNNNNPTYASNKEYFC). Low complexity predominate over residues 1161–1171 (NTTSNNNNNPT).

Belongs to the neurexin family. As to quaternary structure, interacts (via the intracellular domain) with F-actin; the interaction is required for anchoring F-actin at the membrane for gap junction formation. In terms of tissue distribution, highly expressed in pharyngeal g1 and g2 gland cells, pharyngeal muscle cells and the unilateral GABAergic RIS interneuron (at protein level). Expressed in pm5 pharyngeal muscle cells and the nerve ring.

It localises to the cell membrane. It is found in the cell junction. The protein resides in the gap junction. Functionally, required for gap junction formation, playing a role in anchoring the cytoskeletal component F-actin to the membrane of adjacent cells and thus facilitating the formation of gap junction channels in embryonic cells, muscle cells and neuronal cells. Plays a role in maintaining gap junction activity to promote pharyngeal muscle contraction. This chain is Neurexin like receptor 1, found in Caenorhabditis elegans.